We begin with the raw amino-acid sequence, 124 residues long: Probable S-adenosyl-L-methionine-binding protein VNG_1115H (124 aa).

In terms of domain architecture, TsaA-like spans 3 to 124 (ATPIGYADTR…PVLDLKPALD (122 aa)). Residues 20–22 (PRQ), 58–59 (DD), arginine 78, and 111–114 (AHGS) each bind S-adenosyl-L-methionine.

This sequence belongs to the tRNA methyltransferase O family.

This Halobacterium salinarum (strain ATCC 700922 / JCM 11081 / NRC-1) (Halobacterium halobium) protein is Probable S-adenosyl-L-methionine-binding protein VNG_1115H.